Reading from the N-terminus, the 278-residue chain is Adenylate kinase (278 aa).

Residue 50-55 participates in ATP binding; that stretch reads GAGKGT. The segment at 70–99 is NMP; that stretch reads ATGDMLRAQVAKGTALGKQAKKIMNEGGLV. AMP-binding positions include T71, R76, 97–99, 126–129, and Q133; these read GLV and GFPR. The interval 167–204 is LID; that stretch reads GRLVHPASGRSYHRIFNPPKDDMKDDITGEPLVQRSDD. Residues R168 and 177–178 contribute to the ATP site; that span reads SY. AMP contacts are provided by R201 and R212. Q240 lines the ATP pocket.

The protein belongs to the adenylate kinase family. AK2 subfamily. Monomer.

It is found in the cytoplasm. It localises to the cytosol. Its subcellular location is the mitochondrion intermembrane space. It catalyses the reaction AMP + ATP = 2 ADP. Functionally, catalyzes the reversible transfer of the terminal phosphate group between ATP and AMP. Plays an important role in cellular energy homeostasis and in adenine nucleotide metabolism. Adenylate kinase activity is critical for regulation of the phosphate utilization and the AMP de novo biosynthesis pathways. This Neurospora crassa (strain ATCC 24698 / 74-OR23-1A / CBS 708.71 / DSM 1257 / FGSC 987) protein is Adenylate kinase (adk-1).